The primary structure comprises 355 residues: UDP-N-acetylglucosamine--N-acetylmuramyl-(pentapeptide) pyrophosphoryl-undecaprenol N-acetylglucosamine transferase (355 aa).

Residues 12–14 (TGG), N124, R160, S192, I243, 262–267 (ALTVCE), and Q287 contribute to the UDP-N-acetyl-alpha-D-glucosamine site.

Belongs to the glycosyltransferase 28 family. MurG subfamily.

The protein localises to the cell inner membrane. It carries out the reaction di-trans,octa-cis-undecaprenyl diphospho-N-acetyl-alpha-D-muramoyl-L-alanyl-D-glutamyl-meso-2,6-diaminopimeloyl-D-alanyl-D-alanine + UDP-N-acetyl-alpha-D-glucosamine = di-trans,octa-cis-undecaprenyl diphospho-[N-acetyl-alpha-D-glucosaminyl-(1-&gt;4)]-N-acetyl-alpha-D-muramoyl-L-alanyl-D-glutamyl-meso-2,6-diaminopimeloyl-D-alanyl-D-alanine + UDP + H(+). The protein operates within cell wall biogenesis; peptidoglycan biosynthesis. Cell wall formation. Catalyzes the transfer of a GlcNAc subunit on undecaprenyl-pyrophosphoryl-MurNAc-pentapeptide (lipid intermediate I) to form undecaprenyl-pyrophosphoryl-MurNAc-(pentapeptide)GlcNAc (lipid intermediate II). The sequence is that of UDP-N-acetylglucosamine--N-acetylmuramyl-(pentapeptide) pyrophosphoryl-undecaprenol N-acetylglucosamine transferase from Haemophilus ducreyi (strain 35000HP / ATCC 700724).